The primary structure comprises 560 residues: SWI/SNF complex subunit SWI3A homolog (560 aa).

Positions 1 to 13 (MSPPVAGAASSGD) are enriched in low complexity. The tract at residues 1 to 22 (MSPPVAGAASSGDGPPGRPPRE) is disordered. One can recognise an SWIRM domain in the interval 24–127 (YTIPASSGWF…FSASPSRPEA (104 aa)). The SANT domain occupies 242–293 (HSSSAWTDAETLLLLEGVLKHGDDWDLIAQHVRTKNKSECIARLIQLPFGEH). Positions 311 to 330 (TTDGKVNKSTVKESSSQPTE) are enriched in polar residues. Disordered regions lie at residues 311–352 (TTDG…EEHP) and 414–445 (QTRA…PDKK). Residues 331-342 (TVDDMQIDGNED) show a composition bias toward acidic residues. 2 stretches are compositionally biased toward basic and acidic residues: residues 343–352 (GADKSVEEHP) and 424–445 (RQSD…PDKK).

In terms of assembly, interacts with LFR.

It localises to the nucleus. In terms of biological role, component of a multiprotein complex equivalent of the SWI/SNF complex, an ATP-dependent chromatin-remodeling complex, which is required for the positive and negative regulation of gene expression of a large number of genes. It changes chromatin structure by altering DNA-histone contacts within a nucleosome, leading eventually to a change in nucleosome position, thus facilitating or repressing binding of gene-specific transcription factors. The polypeptide is SWI/SNF complex subunit SWI3A homolog (Oryza sativa subsp. japonica (Rice)).